A 1342-amino-acid polypeptide reads, in one-letter code: DNA-directed RNA polymerase subunit beta (1342 aa).

This sequence belongs to the RNA polymerase beta chain family. As to quaternary structure, the RNAP catalytic core consists of 2 alpha, 1 beta, 1 beta' and 1 omega subunit. When a sigma factor is associated with the core the holoenzyme is formed, which can initiate transcription.

The enzyme catalyses RNA(n) + a ribonucleoside 5'-triphosphate = RNA(n+1) + diphosphate. In terms of biological role, DNA-dependent RNA polymerase catalyzes the transcription of DNA into RNA using the four ribonucleoside triphosphates as substrates. This chain is DNA-directed RNA polymerase subunit beta, found in Buchnera aphidicola subsp. Acyrthosiphon pisum (strain Tuc7).